A 93-amino-acid polypeptide reads, in one-letter code: Large ribosomal subunit protein bL27 (93 aa).

This sequence belongs to the bacterial ribosomal protein bL27 family.

The chain is Large ribosomal subunit protein bL27 from Trichormus variabilis (strain ATCC 29413 / PCC 7937) (Anabaena variabilis).